Consider the following 238-residue polypeptide: Uroporphyrinogen-III C-methyltransferase (238 aa).

Residues proline 11, 87-89 (GGD), 117-118 (TS), and methionine 170 each bind S-adenosyl-L-homocysteine.

The protein belongs to the precorrin methyltransferase family. Monomer.

It carries out the reaction uroporphyrinogen III + 2 S-adenosyl-L-methionine = precorrin-2 + 2 S-adenosyl-L-homocysteine + H(+). It functions in the pathway cofactor biosynthesis; adenosylcobalamin biosynthesis; precorrin-2 from uroporphyrinogen III: step 1/1. The protein operates within porphyrin-containing compound metabolism; siroheme biosynthesis; precorrin-2 from uroporphyrinogen III: step 1/1. Its activity is regulated as follows. SUMT exhibits a substrate inhibition phenomenon at uroporphyrinogen III concentrations above 0.5 uM; this property might play a regulatory role in cobalamin biosynthesis. In terms of biological role, catalyzes the two successive C-2 and C-7 methylation reactions involved in the conversion of uroporphyrinogen III to precorrin-2 via the intermediate formation of precorrin-1. It is a step in the biosynthesis of both cobalamin (vitamin B12) and siroheme. The protein is Uroporphyrinogen-III C-methyltransferase of Priestia megaterium (Bacillus megaterium).